The primary structure comprises 302 residues: Aspartate carbamoyltransferase catalytic subunit (302 aa).

Carbamoyl phosphate contacts are provided by arginine 54 and threonine 55. Lysine 82 contributes to the L-aspartate binding site. Positions 104, 132, and 135 each coordinate carbamoyl phosphate. The L-aspartate site is built by arginine 165 and arginine 217. Residues glycine 257 and proline 258 each contribute to the carbamoyl phosphate site.

Belongs to the aspartate/ornithine carbamoyltransferase superfamily. ATCase family. In terms of assembly, heterododecamer (2C3:3R2) of six catalytic PyrB chains organized as two trimers (C3), and six regulatory PyrI chains organized as three dimers (R2).

It carries out the reaction carbamoyl phosphate + L-aspartate = N-carbamoyl-L-aspartate + phosphate + H(+). The protein operates within pyrimidine metabolism; UMP biosynthesis via de novo pathway; (S)-dihydroorotate from bicarbonate: step 2/3. Catalyzes the condensation of carbamoyl phosphate and aspartate to form carbamoyl aspartate and inorganic phosphate, the committed step in the de novo pyrimidine nucleotide biosynthesis pathway. In Thermus thermophilus (strain ATCC BAA-163 / DSM 7039 / HB27), this protein is Aspartate carbamoyltransferase catalytic subunit.